The following is a 386-amino-acid chain: Putative membrane-bound transacylase BcsY (386 aa).

A run of 10 helical transmembrane segments spans residues 37-57 (LAIA…FIGV), 91-111 (LLPA…WWVL), 118-138 (IALN…SGHV), 156-176 (LSLE…LPLT), 181-201 (LVLS…WHTG), 237-257 (AVYA…PLSY), 258-278 (ACPS…IMLP), 290-310 (LSPL…GIVV), 322-342 (AMMA…YVLV), and 362-382 (AALL…ISHV).

This sequence belongs to the acyltransferase 3 family.

The protein localises to the cell inner membrane. The protein operates within glycan metabolism; bacterial cellulose biosynthesis. May acylate a glucose moiety into cellulose fibrils, in cooperation with BcsABII and BcsCII. The protein is Putative membrane-bound transacylase BcsY (bcsY) of Komagataeibacter xylinus (Gluconacetobacter xylinus).